The primary structure comprises 259 residues: Sorbitol-6-phosphate 2-dehydrogenase (259 aa).

Residue 4 to 33 (VAVVIGGGQTLGAFLCHGLAAEGYRVAVVD) participates in NAD(+) binding. Ser-141 serves as a coordination point for substrate. The Proton acceptor role is filled by Tyr-154.

Belongs to the short-chain dehydrogenases/reductases (SDR) family. Homotetramer.

It catalyses the reaction D-sorbitol 6-phosphate + NAD(+) = beta-D-fructose 6-phosphate + NADH + H(+). The protein operates within carbohydrate metabolism; D-sorbitol degradation; D-fructose 6-phosphate from D-sorbitol 6-phosphate: step 1/1. This is Sorbitol-6-phosphate 2-dehydrogenase (srlD) from Escherichia coli (strain K12).